Consider the following 479-residue polypeptide: ATP-dependent RNA helicase DDX19B (479 aa).

At alanine 2 the chain carries N-acetylalanine. An N-terminal lobe region spans residues 2-300; the sequence is ATDSWALAVD…DPNVIKLKRE (299 aa). Residues 34–54 form a disordered region; sequence TNGAVVKTNANAEKTDEEEKE. An N-terminal helix region spans residues 55 to 68; it reads DRAAQSLLNKLIRS. A Q motif motif is present at residues 92–120; that stretch reads KSFEELRLKPQLLQGVYAMGFNRPSKIQE. Residues glutamine 119 and 138-145 each bind ATP; that span reads SQSGTGKT. The 171-residue stretch at 125 to 295 folds into the Helicase ATP-binding domain; it reads LMLAEPPQNL…QKVVPDPNVI (171 aa). The DEAD box signature appears at 242 to 245; that stretch reads DEAD. The tract at residues 301 to 479 is C-terminal lobe; that stretch reads EETLDTIKQY…DLDEIEKIAN (179 aa). The 169-residue stretch at 306–474 folds into the Helicase C-terminal domain; the sequence is TIKQYYVLCS…RLDTDDLDEI (169 aa). Residues arginine 429 and arginine 432 each coordinate ATP.

This sequence belongs to the DEAD box helicase family. DDX19/DBP5 subfamily. In terms of assembly, associates with the nuclear pore complex via interaction with NUP214. Interacts with NUP214 or RNA in a mutually exclusive manner.

The protein localises to the cytoplasm. Its subcellular location is the nucleus. It is found in the nucleoplasm. The catalysed reaction is ATP + H2O = ADP + phosphate + H(+). ATP-dependent RNA helicase involved in mRNA export from the nucleus. Rather than unwinding RNA duplexes, DDX19B functions as a remodeler of ribonucleoprotein particles, whereby proteins bound to nuclear mRNA are dissociated and replaced by cytoplasmic mRNA binding proteins. This is ATP-dependent RNA helicase DDX19B (DDX19B) from Homo sapiens (Human).